Consider the following 199-residue polypeptide: Copper transport protein CTR4 (199 aa).

Transmembrane regions (helical) follow at residues 62–82 (KGMF…IELI) and 152–172 (AFFV…FIFL).

Belongs to the copper transporter (Ctr) (TC 1.A.56) family. SLC31A subfamily.

Its subcellular location is the membrane. Functionally, required for high affinity copper (probably reduced Cu I) transport into the cell. Plays a role in fungal pathogenesis during host infection. This Cryptococcus neoformans var. grubii serotype A (strain H99 / ATCC 208821 / CBS 10515 / FGSC 9487) (Filobasidiella neoformans var. grubii) protein is Copper transport protein CTR4.